Reading from the N-terminus, the 398-residue chain is Phosphoglycerate kinase (398 aa).

Substrate contacts are provided by residues 21–23 (DFN), Arg36, 59–62 (HLGR), Arg119, and Arg157. ATP is bound by residues Lys208, Gly296, Glu327, and 354–357 (GGDS).

Belongs to the phosphoglycerate kinase family. As to quaternary structure, monomer.

It localises to the cytoplasm. The enzyme catalyses (2R)-3-phosphoglycerate + ATP = (2R)-3-phospho-glyceroyl phosphate + ADP. The protein operates within carbohydrate degradation; glycolysis; pyruvate from D-glyceraldehyde 3-phosphate: step 2/5. The sequence is that of Phosphoglycerate kinase from Streptococcus agalactiae serotype Ia (strain ATCC 27591 / A909 / CDC SS700).